A 348-amino-acid chain; its full sequence is Nitrogenase vanadium-iron protein beta chain (348 aa).

Residues cysteine 31, cysteine 56, cysteine 115, and serine 153 each coordinate [8Fe-7S] cluster.

This sequence belongs to the NifD/NifK/NifE/NifN family. As to quaternary structure, hexamer of two alpha, two beta, and two delta chains. It depends on [8Fe-7S] cluster as a cofactor.

The catalysed reaction is N2 + 8 reduced [2Fe-2S]-[ferredoxin] + 16 ATP + 16 H2O = H2 + 8 oxidized [2Fe-2S]-[ferredoxin] + 2 NH4(+) + 16 ADP + 16 phosphate + 6 H(+). In terms of biological role, this vanadium-iron protein is part of the nitrogenase complex that catalyzes the key enzymatic reactions in nitrogen fixation. The polypeptide is Nitrogenase vanadium-iron protein beta chain (vnfK) (Azorhizophilus paspali (Azotobacter paspali)).